Here is a 356-residue protein sequence, read N- to C-terminus: Putative [LysW]-L-2-aminoadipate/[LysW]-L-glutamate phosphate reductase (356 aa).

11-14 (SGYT) lines the NADP(+) pocket. Cys157 is an active-site residue. Asn323 is an NADP(+) binding site.

Belongs to the NAGSA dehydrogenase family. Type 1 subfamily. LysY sub-subfamily.

It is found in the cytoplasm. The enzyme catalyses [amino-group carrier protein]-C-terminal-N-(1-carboxy-5-oxopentan-1-yl)-L-glutamine + phosphate + NADP(+) = [amino-group carrier protein]-C-terminal-N-(1-carboxy-5-phosphooxy-5-oxopentan-1-yl)-L-glutamine + NADPH + H(+). The catalysed reaction is [amino-group carrier protein]-C-terminal-gamma-(L-glutamyl-5-semialdehyde)-L-glutamate + phosphate + NADP(+) = [amino-group carrier protein]-C-terminal-gamma-(5-phospho-L-glutamyl)-L-glutamate + NADPH + H(+). It functions in the pathway amino-acid biosynthesis; L-lysine biosynthesis via AAA pathway; L-lysine from L-alpha-aminoadipate (Thermus route): step 3/5. Its pathway is amino-acid biosynthesis; L-arginine biosynthesis. Involved in both the arginine and lysine biosynthetic pathways. This is Putative [LysW]-L-2-aminoadipate/[LysW]-L-glutamate phosphate reductase from Ignicoccus hospitalis (strain KIN4/I / DSM 18386 / JCM 14125).